Here is a 136-residue protein sequence, read N- to C-terminus: Small ribosomal subunit protein uS9 (136 aa).

This sequence belongs to the universal ribosomal protein uS9 family.

The sequence is that of Small ribosomal subunit protein uS9 from Synechococcus sp. (strain JA-2-3B'a(2-13)) (Cyanobacteria bacterium Yellowstone B-Prime).